Reading from the N-terminus, the 278-residue chain is Small ribosomal subunit protein uS9m (278 aa).

The transit peptide at Met-1–Arg-10 directs the protein to the mitochondrion. A disordered region spans residues Val-259–Arg-278.

It belongs to the universal ribosomal protein uS9 family. As to quaternary structure, component of the mitochondrial small ribosomal subunit (mt-SSU). Mature yeast 74S mitochondrial ribosomes consist of a small (37S) and a large (54S) subunit. The 37S small subunit contains a 15S ribosomal RNA (15S mt-rRNA) and 34 different proteins. The 54S large subunit contains a 21S rRNA (21S mt-rRNA) and 46 different proteins.

It is found in the mitochondrion. Its function is as follows. Component of the mitochondrial ribosome (mitoribosome), a dedicated translation machinery responsible for the synthesis of mitochondrial genome-encoded proteins, including at least some of the essential transmembrane subunits of the mitochondrial respiratory chain. The mitoribosomes are attached to the mitochondrial inner membrane and translation products are cotranslationally integrated into the membrane. The chain is Small ribosomal subunit protein uS9m (MRPS9) from Saccharomyces cerevisiae (strain ATCC 204508 / S288c) (Baker's yeast).